We begin with the raw amino-acid sequence, 450 residues long: UDP-N-acetylmuramoylalanine--D-glutamate ligase (450 aa).

119–125 (GTNGKTT) lines the ATP pocket.

The protein belongs to the MurCDEF family.

Its subcellular location is the cytoplasm. It carries out the reaction UDP-N-acetyl-alpha-D-muramoyl-L-alanine + D-glutamate + ATP = UDP-N-acetyl-alpha-D-muramoyl-L-alanyl-D-glutamate + ADP + phosphate + H(+). Its pathway is cell wall biogenesis; peptidoglycan biosynthesis. In terms of biological role, cell wall formation. Catalyzes the addition of glutamate to the nucleotide precursor UDP-N-acetylmuramoyl-L-alanine (UMA). The sequence is that of UDP-N-acetylmuramoylalanine--D-glutamate ligase from Lactococcus lactis subsp. lactis (strain IL1403) (Streptococcus lactis).